Reading from the N-terminus, the 1170-residue chain is Integrin alpha-2 (1170 aa).

The N-terminal stretch at 1–18 (PLQLVLVFSQGILNCCVA) is a signal peptide. At 19–1121 (YNVGLPKAKI…KPHEKVEVPT (1103 aa)) the chain is on the extracellular side. FG-GAP repeat units follow at residues 23 to 81 (LPKA…TTTC) and 90 to 150 (TSMS…LRTS). Cysteines 72 and 81 form a disulfide. 3 N-linked (GlcNAc...) asparagine glycosylation sites follow: asparagine 94, asparagine 101, and asparagine 332. The region spanning 177 to 354 (WDAVKNFLEK…TIGEQIFSIE (178 aa)) is the VWFA domain. FG-GAP repeat units follow at residues 355–409 (GTVQ…LIFS), 412–464 (AFEQ…ENGN), 466–528 (TVIQ…ILNW), 529–587 (HQFL…MIRL), and 591–653 (QKIL…FTPK). N-linked (GlcNAc...) asparagine glycosylation is found at asparagine 421, asparagine 449, and asparagine 464. The short motif at 472–474 (RGD) is the Cell attachment site element. Ca(2+) is bound by residues aspartate 488, asparagine 490, aspartate 492, aspartate 496, aspartate 552, asparagine 554, aspartate 556, aspartate 560, aspartate 616, asparagine 618, aspartate 620, and aspartate 624. Residues cysteine 669 and cysteine 726 are joined by a disulfide bond. Asparagine 688 and asparagine 748 each carry an N-linked (GlcNAc...) asparagine glycan. 2 disulfides stabilise this stretch: cysteine 778-cysteine 784 and cysteine 854-cysteine 865. Residue asparagine 945 is glycosylated (N-linked (GlcNAc...) asparagine). 2 cysteine pairs are disulfide-bonded: cysteine 1008–cysteine 1039 and cysteine 1044–cysteine 1049. N-linked (GlcNAc...) asparagine glycans are attached at residues asparagine 1063 and asparagine 1070. A helical membrane pass occupies residues 1122–1143 (GVIVGSVIAGILLLLALVAILW). The Cytoplasmic portion of the chain corresponds to 1144–1170 (KLGFFKRKYEKMAKNPDETDETTELNS). The GFFKR motif signature appears at 1146–1150 (GFFKR).

Belongs to the integrin alpha chain family. As to quaternary structure, heterodimer of an alpha and a beta subunit. Alpha-2 associates with beta-1. Interacts with HPS5 and RAB21.

The protein resides in the membrane. Its function is as follows. Integrin alpha-2/beta-1 is a receptor for laminin, collagen, collagen C-propeptides, fibronectin and E-cadherin. It recognizes the proline-hydroxylated sequence G-F-P-G-E-R in collagen. It is responsible for adhesion of platelets and other cells to collagens, modulation of collagen and collagenase gene expression, force generation and organization of newly synthesized extracellular matrix. The sequence is that of Integrin alpha-2 (ITGA2) from Bos taurus (Bovine).